Consider the following 350-residue polypeptide: Putative D-xylulose reductase (350 aa).

Zn(2+)-binding residues include C43, H68, and E154.

It belongs to the zinc-containing alcohol dehydrogenase family. Zn(2+) serves as cofactor.

It carries out the reaction xylitol + NAD(+) = D-xylulose + NADH + H(+). In Agrobacterium fabrum (strain C58 / ATCC 33970) (Agrobacterium tumefaciens (strain C58)), this protein is Putative D-xylulose reductase.